We begin with the raw amino-acid sequence, 405 residues long: G1/S-specific cyclin-D (405 aa).

In terms of domain architecture, Cyclin N-terminal spans 76 to 200; sequence FYNCMEYEEA…LIVTTLQWET (125 aa). Positions 301 to 405 are disordered; it reads YTSEDAEKTE…STPPKIFKTL (105 aa). The segment covering 311 to 321 has biased composition (polar residues); it reads PTPSAPASTQE. A compositionally biased stretch (basic and acidic residues) spans 326–335; it reads QELKELKEEP. Positions 358-380 are enriched in polar residues; that stretch reads SEQTPSTPLNDSGFSSDVSSPAS.

It belongs to the cyclin family. Cyclin D subfamily. Interacts with cdk-4; the interaction is likely involved in regulating cdk-4 activity.

Functionally, in association with cdk-4, regulates the progression through the G1 phase of the cell cycle during postembryonic development. Regulates proliferation of the coelomocyte lineage and intestinal cells during late embryogenesis. In complex with cdk-4, involved in sex determination during gonadogenesis by regulating the asymmetric division of the somatic gonadal precursor cell (SGP). The polypeptide is G1/S-specific cyclin-D (Caenorhabditis elegans).